The following is a 471-amino-acid chain: Trimethyllysine dioxygenase (471 aa).

H251 and D253 together coordinate Fe cation. Residues K272 to A302 form a disordered region. The span at S276 to P288 shows a compositional bias: pro residues. H430 contacts Fe cation.

It belongs to the gamma-BBH/TMLD family. The cofactor is Fe(2+). L-ascorbate serves as cofactor.

Its subcellular location is the cytoplasm. The catalysed reaction is N(6),N(6),N(6)-trimethyl-L-lysine + 2-oxoglutarate + O2 = (3S)-3-hydroxy-N(6),N(6),N(6)-trimethyl-L-lysine + succinate + CO2. It functions in the pathway amine and polyamine biosynthesis; carnitine biosynthesis. Its function is as follows. Converts trimethyllysine (TML) into hydroxytrimethyllysine (HTML). The chain is Trimethyllysine dioxygenase (cbs-1) from Neurospora crassa (strain ATCC 24698 / 74-OR23-1A / CBS 708.71 / DSM 1257 / FGSC 987).